The chain runs to 338 residues: Heat-inducible transcription repressor HrcA (338 aa).

Belongs to the HrcA family.

Its function is as follows. Negative regulator of class I heat shock genes (grpE-dnaK-dnaJ and groELS operons). Prevents heat-shock induction of these operons. In Thermotoga petrophila (strain ATCC BAA-488 / DSM 13995 / JCM 10881 / RKU-1), this protein is Heat-inducible transcription repressor HrcA.